Consider the following 275-residue polypeptide: Dermonecrotic toxin LruSicTox-alphaIV1 (275 aa).

Histidine 5 is a catalytic residue. Mg(2+) contacts are provided by glutamate 25 and aspartate 27. The active-site Nucleophile is the histidine 41. Intrachain disulfides connect cysteine 45–cysteine 51 and cysteine 47–cysteine 192. Aspartate 85 contributes to the Mg(2+) binding site.

It belongs to the arthropod phospholipase D family. Class II subfamily. Mg(2+) serves as cofactor. In terms of tissue distribution, expressed by the venom gland.

The protein resides in the secreted. The enzyme catalyses an N-(acyl)-sphingosylphosphocholine = an N-(acyl)-sphingosyl-1,3-cyclic phosphate + choline. The catalysed reaction is an N-(acyl)-sphingosylphosphoethanolamine = an N-(acyl)-sphingosyl-1,3-cyclic phosphate + ethanolamine. It carries out the reaction a 1-acyl-sn-glycero-3-phosphocholine = a 1-acyl-sn-glycero-2,3-cyclic phosphate + choline. It catalyses the reaction a 1-acyl-sn-glycero-3-phosphoethanolamine = a 1-acyl-sn-glycero-2,3-cyclic phosphate + ethanolamine. Functionally, dermonecrotic toxins cleave the phosphodiester linkage between the phosphate and headgroup of certain phospholipids (sphingolipid and lysolipid substrates), forming an alcohol (often choline) and a cyclic phosphate. This toxin acts on sphingomyelin (SM). It may also act on ceramide phosphoethanolamine (CPE), lysophosphatidylcholine (LPC) and lysophosphatidylethanolamine (LPE), but not on lysophosphatidylserine (LPS), and lysophosphatidylglycerol (LPG). It acts by transphosphatidylation, releasing exclusively cyclic phosphate products as second products. Induces dermonecrosis, hemolysis, increased vascular permeability, edema, inflammatory response, and platelet aggregation. This chain is Dermonecrotic toxin LruSicTox-alphaIV1, found in Loxosceles rufescens (Mediterranean recluse spider).